We begin with the raw amino-acid sequence, 784 residues long: Serine/threonine-protein kinase DCLK2 (784 aa).

The segment at 1–45 (MASTRSIELEHFEERDKRPRPGSRRGAPSSSGGSSSSGPKGNGLI) is disordered. Positions 7–19 (IELEHFEERDKRP) are enriched in basic and acidic residues. A compositionally biased stretch (low complexity) spans 24 to 39 (RRGAPSSSGGSSSSGP). The residue at position 61 (threonine 61) is a Phosphothreonine. Doublecortin domains are found at residues 72–158 (KKAR…VDYT) and 197–280 (KLVT…AQDD). Low complexity-rich tracts occupy residues 300–312 (AVKYSGSKSPGPS) and 341–364 (TPSSQLSTPKSTKSSSSSPTSPGS). The segment at 300 to 368 (AVKYSGSKSP…PTSPGSFRGL (69 aa)) is disordered. Serine 379 carries the phosphoserine modification. Positions 411–668 (YKIGKVIGDG…AGEILSHPWV (258 aa)) constitute a Protein kinase domain. ATP contacts are provided by residues 417 to 425 (IGDGNFAVV) and lysine 440. Aspartate 532 (proton acceptor) is an active-site residue. A Phosphoserine modification is found at serine 664. The residue at position 683 (threonine 683) is a Phosphothreonine. Residues 724–784 (CQDSSRPGME…RAGTWRRHRD (61 aa)) form a disordered region. The segment covering 741 to 758 (SASAEEPPVSAPAAAPAP) has biased composition (low complexity).

This sequence belongs to the protein kinase superfamily. CAMK Ser/Thr protein kinase family. CaMK subfamily. In terms of assembly, binds to and stabilizes microtubules. Interacts with MAPK8IP1/JIP-1, MAPK8IP2/JIP-2, MAPK9/JNK2, PPP1R9B/NEURABIN-2 and actin. Post-translationally, autophosphorylated.

The protein resides in the cytoplasm. The protein localises to the cytoskeleton. It carries out the reaction L-seryl-[protein] + ATP = O-phospho-L-seryl-[protein] + ADP + H(+). The enzyme catalyses L-threonyl-[protein] + ATP = O-phospho-L-threonyl-[protein] + ADP + H(+). Protein kinase with a significantly reduced Ca(2+)/CAM affinity and dependence compared to other members of the CaMK family. May play a role in the down-regulation of CRE-dependent gene activation probably by phosphorylation of the CREB coactivator CRTC2/TORC2 and the resulting retention of TORC2 in the cytoplasm. The sequence is that of Serine/threonine-protein kinase DCLK2 (DCLK2) from Ailuropoda melanoleuca (Giant panda).